The chain runs to 207 residues: Small ribosomal subunit protein uS4 (207 aa).

A compositionally biased stretch (basic and acidic residues) spans 29 to 38 (SDKAKFDSKP). Residues 29–54 (SDKAKFDSKPGQHGRTSGTRTSDYGL) form a disordered region. The segment covering 42–52 (GRTSGTRTSDY) has biased composition (polar residues). An S4 RNA-binding domain is found at 97-160 (SRLDNVVYRM…KKQTRIAEAL (64 aa)).

It belongs to the universal ribosomal protein uS4 family. As to quaternary structure, part of the 30S ribosomal subunit. Contacts protein S5. The interaction surface between S4 and S5 is involved in control of translational fidelity.

Functionally, one of the primary rRNA binding proteins, it binds directly to 16S rRNA where it nucleates assembly of the body of the 30S subunit. In terms of biological role, with S5 and S12 plays an important role in translational accuracy. The polypeptide is Small ribosomal subunit protein uS4 (Polaromonas naphthalenivorans (strain CJ2)).